The chain runs to 358 residues: Aerobic magnesium-protoporphyrin IX monomethyl ester [oxidative] cyclase (358 aa).

It belongs to the AcsF family. Fe cation is required as a cofactor.

The enzyme catalyses Mg-protoporphyrin IX 13-monomethyl ester + 3 NADPH + 3 O2 + 2 H(+) = 3,8-divinyl protochlorophyllide a + 3 NADP(+) + 5 H2O. It participates in porphyrin-containing compound metabolism; chlorophyll biosynthesis. Functionally, catalyzes the formation of the isocyclic ring in chlorophyll biosynthesis in aerobic conditions. Mediates the cyclase reaction, which results in the formation of divinylprotochlorophyllide (Pchlide) characteristic of all chlorophylls from magnesium-protoporphyrin IX 13-monomethyl ester (MgPMME). This is Aerobic magnesium-protoporphyrin IX monomethyl ester [oxidative] cyclase from Rubrivivax gelatinosus (Rhodocyclus gelatinosus).